Here is a 98-residue protein sequence, read N- to C-terminus: DNA-binding protein Fis (98 aa).

Positions 74 to 93 form a DNA-binding region, H-T-H motif; sequence QTRAALMMGINRGTLRKKLK.

The protein belongs to the transcriptional regulatory Fis family. Homodimer.

In terms of biological role, activates ribosomal RNA transcription. Plays a direct role in upstream activation of rRNA promoters. This is DNA-binding protein Fis from Enterobacter sp. (strain 638).